The sequence spans 104 residues: ATP-dependent Clp protease adapter protein ClpS (104 aa).

Belongs to the ClpS family. Binds to the N-terminal domain of the chaperone ClpA.

In terms of biological role, involved in the modulation of the specificity of the ClpAP-mediated ATP-dependent protein degradation. The chain is ATP-dependent Clp protease adapter protein ClpS from Bordetella bronchiseptica (strain ATCC BAA-588 / NCTC 13252 / RB50) (Alcaligenes bronchisepticus).